The sequence spans 598 residues: Proline--tRNA ligase (598 aa).

It belongs to the class-II aminoacyl-tRNA synthetase family. ProS type 1 subfamily. As to quaternary structure, homodimer.

It localises to the cytoplasm. It carries out the reaction tRNA(Pro) + L-proline + ATP = L-prolyl-tRNA(Pro) + AMP + diphosphate. Functionally, catalyzes the attachment of proline to tRNA(Pro) in a two-step reaction: proline is first activated by ATP to form Pro-AMP and then transferred to the acceptor end of tRNA(Pro). As ProRS can inadvertently accommodate and process non-cognate amino acids such as alanine and cysteine, to avoid such errors it has two additional distinct editing activities against alanine. One activity is designated as 'pretransfer' editing and involves the tRNA(Pro)-independent hydrolysis of activated Ala-AMP. The other activity is designated 'posttransfer' editing and involves deacylation of mischarged Ala-tRNA(Pro). The misacylated Cys-tRNA(Pro) is not edited by ProRS. The protein is Proline--tRNA ligase of Rippkaea orientalis (strain PCC 8801 / RF-1) (Cyanothece sp. (strain PCC 8801)).